A 411-amino-acid chain; its full sequence is Secretion apparatus protein BsaZ (411 aa).

Transmembrane regions (helical) follow at residues 28-48, 80-100, 137-157, and 175-195; these read IVALIVIATGALAAPALVDLT, IAAPFVLLCAAAGALPSLVQS, ALLYVGVFALTVRVFAGLYHA, and IVLTVRLVLLFLLCALPVLIL. The segment at 341 to 411 is disordered; it reads AANRGGPPPE…APARTGDQNA (71 aa). Positions 370–404 are enriched in low complexity; sequence DACADNAFPDDAPPGAAAPNAGSPDGPAPDGGAPA.

This sequence belongs to the type III secretion exporter family.

The protein resides in the cell membrane. Functionally, part of the bsa type III secretion system, is involved in the intracellular replication of invading bacteria inside the host cell. Probably necessary for the lysis of the vacuole membrane and escape into the host cell cytoplasm. The polypeptide is Secretion apparatus protein BsaZ (bsaZ) (Burkholderia pseudomallei (strain 1026b)).